The following is a 535-amino-acid chain: CTP synthase (535 aa).

Residues 1–267 (MTKFIFVTGG…DDIVIKRLDL (267 aa)) are amidoligase domain. Residue Ser13 participates in CTP binding. UTP is bound at residue Ser13. 14-19 (SLGKGI) provides a ligand contact to ATP. Tyr54 lines the L-glutamine pocket. Asp71 contacts ATP. Positions 71 and 141 each coordinate Mg(2+). CTP is bound by residues 148-150 (DIE), 188-193 (KTKPTQ), and Lys224. UTP contacts are provided by residues 188–193 (KTKPTQ) and Lys224. 240 to 242 (RDA) lines the ATP pocket. Residues 293-535 (TIGLVGKYVS…VEAAYKHQNK (243 aa)) enclose the Glutamine amidotransferase type-1 domain. Gly355 contributes to the L-glutamine binding site. The Nucleophile; for glutamine hydrolysis role is filled by Cys382. L-glutamine contacts are provided by residues 383 to 386 (LGMQ), Glu406, and Arg463. Catalysis depends on residues His508 and Glu510.

This sequence belongs to the CTP synthase family. As to quaternary structure, homotetramer.

It catalyses the reaction UTP + L-glutamine + ATP + H2O = CTP + L-glutamate + ADP + phosphate + 2 H(+). It carries out the reaction L-glutamine + H2O = L-glutamate + NH4(+). The enzyme catalyses UTP + NH4(+) + ATP = CTP + ADP + phosphate + 2 H(+). It participates in pyrimidine metabolism; CTP biosynthesis via de novo pathway; CTP from UDP: step 2/2. Its activity is regulated as follows. Allosterically activated by GTP, when glutamine is the substrate; GTP has no effect on the reaction when ammonia is the substrate. The allosteric effector GTP functions by stabilizing the protein conformation that binds the tetrahedral intermediate(s) formed during glutamine hydrolysis. Inhibited by the product CTP, via allosteric rather than competitive inhibition. Its function is as follows. Catalyzes the ATP-dependent amination of UTP to CTP with either L-glutamine or ammonia as the source of nitrogen. Regulates intracellular CTP levels through interactions with the four ribonucleotide triphosphates. This chain is CTP synthase, found in Staphylococcus haemolyticus (strain JCSC1435).